The sequence spans 692 residues: Elongation factor G (692 aa).

Residues 8–283 enclose the tr-type G domain; sequence DRYRNIGIMA…AVVDFLPSPL (276 aa). GTP-binding positions include 17-24, 81-85, and 135-138; these read AHIDAGKT, DTPGH, and NKMD.

It belongs to the TRAFAC class translation factor GTPase superfamily. Classic translation factor GTPase family. EF-G/EF-2 subfamily.

It localises to the cytoplasm. In terms of biological role, catalyzes the GTP-dependent ribosomal translocation step during translation elongation. During this step, the ribosome changes from the pre-translocational (PRE) to the post-translocational (POST) state as the newly formed A-site-bound peptidyl-tRNA and P-site-bound deacylated tRNA move to the P and E sites, respectively. Catalyzes the coordinated movement of the two tRNA molecules, the mRNA and conformational changes in the ribosome. This Rhodospirillum rubrum (strain ATCC 11170 / ATH 1.1.1 / DSM 467 / LMG 4362 / NCIMB 8255 / S1) protein is Elongation factor G.